Here is a 783-residue protein sequence, read N- to C-terminus: RNA exonuclease 5 (783 aa).

An Exonuclease domain is found at 230–378 (LFGLDCEMCL…EDARTTLELA (149 aa)). RRM domains are found at residues 503–577 (STVY…RPVT) and 598–677 (GTIY…RHLH).

The sequence is that of RNA exonuclease 5 (REXO5) from Bos taurus (Bovine).